The primary structure comprises 710 residues: Cyclin-dependent kinase G-2 (710 aa).

The interval 1–350 (MAAGRHGGYR…ETPEPVKPPH (350 aa)) is disordered. Residues 8-30 (GYRDYEARERELDAEASRRSKEQ) are compositionally biased toward basic and acidic residues. The span at 31 to 40 (QHHHHPSGRH) shows a compositional bias: basic residues. Basic and acidic residues predominate over residues 41 to 64 (QRGDSDPRCEADRRRDGGRSRGGR). Low complexity predominate over residues 124–133 (SVVAASASSP). The segment covering 144–163 (WDRDSPKPMHSDVAKGKKAV) has biased composition (basic and acidic residues). Residues 170–182 (LPLPPPPPLPPQD) are compositionally biased toward pro residues. Basic and acidic residues-rich tracts occupy residues 183–195 (HIPERLAVEKSPM) and 209–218 (LQEHAESRVM). Acidic residues predominate over residues 299–308 (DENEDLEVDK). Positions 335-344 (YEVRRSETPE) are enriched in basic and acidic residues. The Protein kinase domain occupies 365-656 (FERLNKINEG…ADAALQHEWF (292 aa)). ATP contacts are provided by residues 371 to 379 (INEGTYGVV) and K394. At T375 the chain carries Phosphothreonine. Y376 bears the Phosphotyrosine mark. The active-site Proton acceptor is D489. S516 is modified (phosphoserine). T522 is modified (phosphothreonine).

This sequence belongs to the protein kinase superfamily. CMGC Ser/Thr protein kinase family. CDC2/CDKX subfamily.

The enzyme catalyses L-seryl-[protein] + ATP = O-phospho-L-seryl-[protein] + ADP + H(+). It carries out the reaction L-threonyl-[protein] + ATP = O-phospho-L-threonyl-[protein] + ADP + H(+). The catalysed reaction is [DNA-directed RNA polymerase] + ATP = phospho-[DNA-directed RNA polymerase] + ADP + H(+). The chain is Cyclin-dependent kinase G-2 (CDKG-2) from Oryza sativa subsp. indica (Rice).